The chain runs to 240 residues: uncharacterized protein (240 aa).

The segment at 216-240 (MKQSKNKPRIRQAVGATRQCRKPQA) is disordered.

This is an uncharacterized protein from Escherichia coli (strain K12).